Here is a 309-residue protein sequence, read N- to C-terminus: Probable WRKY transcription factor 26 (309 aa).

The disordered stretch occupies residues Met1–Ser24. A DNA-binding region (WRKY 1) is located at residues Ser111 to Pro176. The Zn(2+) site is built by Cys142, Cys147, His171, and His173. Residues Tyr167 to Arg210 form a disordered region. The segment covering Lys175 to Gly196 has biased composition (polar residues). A compositionally biased stretch (basic and acidic residues) spans Asp197 to Arg210. The segment at residues Ser228 to Pro293 is a DNA-binding region (WRKY 2). Zn(2+) is bound by residues Cys259, Cys264, His288, and His290.

It belongs to the WRKY group I family. Interacts with VQ10.

It localises to the nucleus. Transcription factor. Interacts specifically with the W box (5'-(T)TGAC[CT]-3'), a frequently occurring elicitor-responsive cis-acting element. Functions with WRKY25 and WRKY33 as positive regulator of plant thermotolerance by partially participating in ethylene-response signal transduction pathway. The chain is Probable WRKY transcription factor 26 (WRKY26) from Arabidopsis thaliana (Mouse-ear cress).